A 366-amino-acid chain; its full sequence is Small ribosomal subunit biogenesis GTPase RsgA (366 aa).

Residues Arg107–Val266 enclose the CP-type G domain. GTP-binding positions include Thr154–Asp157 and Gly208–Thr216. Zn(2+) contacts are provided by Cys289, Cys294, His296, and Cys302.

The protein belongs to the TRAFAC class YlqF/YawG GTPase family. RsgA subfamily. As to quaternary structure, monomer. Associates with 30S ribosomal subunit, binds 16S rRNA. Requires Zn(2+) as cofactor.

The protein resides in the cytoplasm. Functionally, one of several proteins that assist in the late maturation steps of the functional core of the 30S ribosomal subunit. Helps release RbfA from mature subunits. May play a role in the assembly of ribosomal proteins into the subunit. Circularly permuted GTPase that catalyzes slow GTP hydrolysis, GTPase activity is stimulated by the 30S ribosomal subunit. This Streptomyces coelicolor (strain ATCC BAA-471 / A3(2) / M145) protein is Small ribosomal subunit biogenesis GTPase RsgA.